We begin with the raw amino-acid sequence, 39 residues long: Natriuretic peptide CnNP-a (39 aa).

A propeptide spanning residues 1 to 8 is cleaved from the precursor; that stretch reads SGSKTAKI. Cysteines 12 and 28 form a disulfide.

Belongs to the natriuretic peptide family. Expressed by the venom gland.

It localises to the secreted. Functionally, snake venom natriuretic peptide that targets both NPR1 and NPR2. Exhibits hypotensive and vasodepressor activities. This chain is Natriuretic peptide CnNP-a, found in Cryptophis nigrescens (Eastern small-eyed snake).